The primary structure comprises 474 residues: ABHD16B (474 aa).

The 119-residue stretch at 175–293 (VICCEGNAGF…MPQSWKGLVV (119 aa)) folds into the AB hydrolase-1 domain. Catalysis depends on charge relay system residues Ser-248, Asp-323, and His-423.

Belongs to the AB hydrolase superfamily. ABHD16 family.

The catalysed reaction is a 1,2-diacyl-sn-glycero-3-phospho-L-serine + H2O = a 2-acyl-sn-glycero-3-phospho-L-serine + a fatty acid + H(+). It carries out the reaction a 1-acylglycerol + H2O = glycerol + a fatty acid + H(+). It catalyses the reaction 1-(9Z-octadecenoyl)-glycerol + H2O = glycerol + (9Z)-octadecenoate + H(+). Functionally, hydrolyzes the sn-1 position of glycerophospholipids with high specificity towards phosphatidylserine (PS), PS-PLA1 enzyme. Also hydrolyzes the acyl chain of glycerolipids with a preference for the monoacylglycerol (MAG) 1-acylglycerol, MAG lipase. Plays a regulatory role in cellular lipid homeostasis by modulating genes involved in neutral lipid degradation and in phospholipid synthesis and composition. In Rattus norvegicus (Rat), this protein is ABHD16B.